A 448-amino-acid polypeptide reads, in one-letter code: Glutamyl-tRNA reductase (448 aa).

Substrate contacts are provided by residues 49-52 (TCNR), S109, 114-116 (ETQ), and Q120. C50 functions as the Nucleophile in the catalytic mechanism. 189–194 (GAGEMS) is a binding site for NADP(+).

This sequence belongs to the glutamyl-tRNA reductase family. Homodimer.

The catalysed reaction is (S)-4-amino-5-oxopentanoate + tRNA(Glu) + NADP(+) = L-glutamyl-tRNA(Glu) + NADPH + H(+). It participates in porphyrin-containing compound metabolism; protoporphyrin-IX biosynthesis; 5-aminolevulinate from L-glutamyl-tRNA(Glu): step 1/2. Its function is as follows. Catalyzes the NADPH-dependent reduction of glutamyl-tRNA(Glu) to glutamate 1-semialdehyde (GSA). The polypeptide is Glutamyl-tRNA reductase (Staphylococcus aureus (strain bovine RF122 / ET3-1)).